The primary structure comprises 441 residues: Ribosomal protein uS12 methylthiotransferase RimO (441 aa).

The MTTase N-terminal domain maps to 8–118 (PKIGFVSLGC…VLEHVHHYVP (111 aa)). [4Fe-4S] cluster contacts are provided by C17, C53, C82, C150, C154, and C157. A Radical SAM core domain is found at 136 to 373 (LTPRHYAYLK…MQLQQQISAE (238 aa)). The region spanning 376 to 441 (QEKVGREILV…DEYDLWGSRV (66 aa)) is the TRAM domain.

The protein belongs to the methylthiotransferase family. RimO subfamily. [4Fe-4S] cluster serves as cofactor.

The protein resides in the cytoplasm. The catalysed reaction is L-aspartate(89)-[ribosomal protein uS12]-hydrogen + (sulfur carrier)-SH + AH2 + 2 S-adenosyl-L-methionine = 3-methylsulfanyl-L-aspartate(89)-[ribosomal protein uS12]-hydrogen + (sulfur carrier)-H + 5'-deoxyadenosine + L-methionine + A + S-adenosyl-L-homocysteine + 2 H(+). Catalyzes the methylthiolation of an aspartic acid residue of ribosomal protein uS12. In Shigella flexneri, this protein is Ribosomal protein uS12 methylthiotransferase RimO.